Here is a 343-residue protein sequence, read N- to C-terminus: L-rhamnose-proton symporter (343 aa).

Helical transmembrane passes span 4 to 24 (AIIL…CFYA), 38 to 58 (WSIG…YLLL), 68 to 88 (FSIA…IGNI), 101 to 121 (MGIG…TPIL), 137 to 157 (TLLG…AGLL), 175 to 195 (LILA…MDAA), 207 to 227 (INSL…GAII), 254 to 274 (LLIT…LQFF), 289 to 309 (MSWM…GLLL), and 320 to 340 (VAVL…VGLG).

The protein belongs to the L-rhamnose transporter (TC 2.A.7.6) family.

It localises to the cell inner membrane. The enzyme catalyses L-rhamnopyranose(in) + H(+)(in) = L-rhamnopyranose(out) + H(+)(out). Its function is as follows. Uptake of L-rhamnose across the cytoplasmic membrane with the concomitant transport of protons into the cell (symport system). This Yersinia pestis bv. Antiqua (strain Antiqua) protein is L-rhamnose-proton symporter.